Consider the following 65-residue polypeptide: Small vasohibin-binding protein (65 aa).

Over residues 1-22 (MEPACRKDKQKQQTPTRGDRTK) the composition is skewed to basic and acidic residues. The interval 1–30 (MEPACRKDKQKQQTPTRGDRTKQKTAQQEL) is disordered. Residues 31–51 (KQRQRAEIYALNKVMTELEQQ) adopt a coiled-coil conformation.

This sequence belongs to the SVBP family.

It localises to the cytoplasm. The protein localises to the secreted. The protein resides in the cytoskeleton. Enhances the tyrosine carboxypeptidase activity of vash1 and vash2, thereby promoting the removal of the C-terminal tyrosine residue of alpha-tubulin. Also required to enhance the solubility and secretion of vash1 and vash2. May play a role in axon and excitatory synapse formation. In Danio rerio (Zebrafish), this protein is Small vasohibin-binding protein.